Consider the following 327-residue polypeptide: Ketol-acid reductoisomerase (NADP(+)) (327 aa).

Residues 2-182 enclose the KARI N-terminal Rossmann domain; the sequence is AKIYTDKDAS…GATRAGVIET (181 aa). NADP(+) is bound by residues 25–28, Arg-48, Ser-53, and 83–86; these read YGIQ and DMEQ. His-108 is an active-site residue. Gly-134 lines the NADP(+) pocket. The KARI C-terminal knotted domain occupies 183-327; that stretch reads TFAEETETDL…GAEMRKLLFG (145 aa). Residues Asp-191, Glu-195, Glu-227, and Glu-231 each contribute to the Mg(2+) site. Ser-252 is a substrate binding site.

This sequence belongs to the ketol-acid reductoisomerase family. The cofactor is Mg(2+).

It carries out the reaction (2R)-2,3-dihydroxy-3-methylbutanoate + NADP(+) = (2S)-2-acetolactate + NADPH + H(+). The catalysed reaction is (2R,3R)-2,3-dihydroxy-3-methylpentanoate + NADP(+) = (S)-2-ethyl-2-hydroxy-3-oxobutanoate + NADPH + H(+). It participates in amino-acid biosynthesis; L-isoleucine biosynthesis; L-isoleucine from 2-oxobutanoate: step 2/4. The protein operates within amino-acid biosynthesis; L-valine biosynthesis; L-valine from pyruvate: step 2/4. In terms of biological role, involved in the biosynthesis of branched-chain amino acids (BCAA). Catalyzes an alkyl-migration followed by a ketol-acid reduction of (S)-2-acetolactate (S2AL) to yield (R)-2,3-dihydroxy-isovalerate. In the isomerase reaction, S2AL is rearranged via a Mg-dependent methyl migration to produce 3-hydroxy-3-methyl-2-ketobutyrate (HMKB). In the reductase reaction, this 2-ketoacid undergoes a metal-dependent reduction by NADPH to yield (R)-2,3-dihydroxy-isovalerate. The sequence is that of Ketol-acid reductoisomerase (NADP(+)) from Pyrobaculum neutrophilum (strain DSM 2338 / JCM 9278 / NBRC 100436 / V24Sta) (Thermoproteus neutrophilus).